The chain runs to 79 residues: DNA-directed RNA polymerase subunit omega (79 aa).

The protein belongs to the RNA polymerase subunit omega family. The RNAP catalytic core consists of 2 alpha, 1 beta, 1 beta' and 1 omega subunit. When a sigma factor is associated with the core the holoenzyme is formed, which can initiate transcription.

The catalysed reaction is RNA(n) + a ribonucleoside 5'-triphosphate = RNA(n+1) + diphosphate. In terms of biological role, promotes RNA polymerase assembly. Latches the N- and C-terminal regions of the beta' subunit thereby facilitating its interaction with the beta and alpha subunits. This Thermotoga maritima (strain ATCC 43589 / DSM 3109 / JCM 10099 / NBRC 100826 / MSB8) protein is DNA-directed RNA polymerase subunit omega (rpoZ).